The sequence spans 349 residues: Magnesium-protoporphyrin IX monomethyl ester [oxidative] cyclase (349 aa).

Positions 1–10 (MTATTATAPT) are enriched in low complexity. The disordered stretch occupies residues 1-23 (MTATTATAPTMRGGGRNELPPHL).

The protein belongs to the AcsF family. Fe cation serves as cofactor.

It carries out the reaction Mg-protoporphyrin IX 13-monomethyl ester + 3 NADPH + 3 O2 + 2 H(+) = 3,8-divinyl protochlorophyllide a + 3 NADP(+) + 5 H2O. It functions in the pathway porphyrin-containing compound metabolism; chlorophyll biosynthesis (light-independent). Catalyzes the formation of the isocyclic ring in chlorophyll biosynthesis. Mediates the cyclase reaction, which results in the formation of divinylprotochlorophyllide (Pchlide) characteristic of all chlorophylls from magnesium-protoporphyrin IX 13-monomethyl ester (MgPMME). This is Magnesium-protoporphyrin IX monomethyl ester [oxidative] cyclase from Prochlorococcus marinus (strain MIT 9313).